A 409-amino-acid chain; its full sequence is Effector protein BipC (409 aa).

2 disordered regions span residues 268–287 (RETGESVRHEIDPGGERMSD) and 330–396 (SGGQ…VAND). Positions 360–369 (AQQTAMAAAS) are enriched in low complexity. Residues 370–382 (ARDEAAHRGRDAA) are compositionally biased toward basic and acidic residues.

It belongs to the SctB/SipC family.

Its subcellular location is the secreted. The protein is Effector protein BipC (bipC) of Burkholderia thailandensis (strain ATCC 700388 / DSM 13276 / CCUG 48851 / CIP 106301 / E264).